Here is a 147-residue protein sequence, read N- to C-terminus: D-aminoacyl-tRNA deacylase (147 aa).

Residues 136 to 137 (GP) carry the Gly-cisPro motif, important for rejection of L-amino acids motif.

This sequence belongs to the DTD family. In terms of assembly, homodimer.

Its subcellular location is the cytoplasm. It carries out the reaction glycyl-tRNA(Ala) + H2O = tRNA(Ala) + glycine + H(+). The enzyme catalyses a D-aminoacyl-tRNA + H2O = a tRNA + a D-alpha-amino acid + H(+). An aminoacyl-tRNA editing enzyme that deacylates mischarged D-aminoacyl-tRNAs. Also deacylates mischarged glycyl-tRNA(Ala), protecting cells against glycine mischarging by AlaRS. Acts via tRNA-based rather than protein-based catalysis; rejects L-amino acids rather than detecting D-amino acids in the active site. By recycling D-aminoacyl-tRNA to D-amino acids and free tRNA molecules, this enzyme counteracts the toxicity associated with the formation of D-aminoacyl-tRNA entities in vivo and helps enforce protein L-homochirality. This is D-aminoacyl-tRNA deacylase from Streptococcus pneumoniae (strain P1031).